The following is a 199-amino-acid chain: Phosphatidylethanolamine N-methyltransferase (199 aa).

Residues 2–12 (SWLLGYVDPTE) lie on the Lumenal side of the membrane. Positions 13 to 33 (PSFVAAVLTIVFNPLFWNVVA) form an intramembrane region, helical. The Lumenal portion of the chain corresponds to 34–45 (RWEQRTRKLSRA). The chain crosses the membrane as a helical span at residues 46–66 (FGSPYLACYSLGSIILLLNIL). The Cytoplasmic segment spans residues 67–93 (RSHCFTQAMMSQPKMEGLDSHTIYFLG). The chain crosses the membrane as a helical span at residues 94-114 (LALLGWGLVFVLSSFYALGFT). 98–100 (GWG) lines the S-adenosyl-L-methionine pocket. Residues 115-157 (GTFLGDYFGILKESRVTTFPFSVLDNPMYWGSTANYLGWALMH) lie on the Lumenal side of the membrane. The chain crosses the membrane as a helical span at residues 158–178 (ASPTGLLLTVLVALVYVVALL). Residues 179–199 (FEEPFTAEIYRRKATRLHKRS) are Cytoplasmic-facing. Residue 180-181 (EE) coordinates S-adenosyl-L-methionine.

This sequence belongs to the class VI-like SAM-binding methyltransferase superfamily. PEMT/PEM2 methyltransferase family. Expressed in liver (at protein level).

It localises to the endoplasmic reticulum membrane. The protein localises to the mitochondrion membrane. It catalyses the reaction a 1,2-diacyl-sn-glycero-3-phosphoethanolamine + S-adenosyl-L-methionine = a 1,2-diacyl-sn-glycero-3-phospho-N-methylethanolamine + S-adenosyl-L-homocysteine + H(+). The enzyme catalyses a 1,2-diacyl-sn-glycero-3-phospho-N-methylethanolamine + S-adenosyl-L-methionine = a 1,2-diacyl-sn-glycero-3-phospho-N,N-dimethylethanolamine + S-adenosyl-L-homocysteine + H(+). It carries out the reaction a 1,2-diacyl-sn-glycero-3-phospho-N,N-dimethylethanolamine + S-adenosyl-L-methionine = a 1,2-diacyl-sn-glycero-3-phosphocholine + S-adenosyl-L-homocysteine + H(+). The catalysed reaction is 1,2-di-(9Z-octadecenoyl)-sn-glycero-3-phosphoethanolamine + S-adenosyl-L-methionine = 1,2-di-(9Z-octadecenoyl)-sn-glycero-3-phospho-N-methylethanolamine + S-adenosyl-L-homocysteine + H(+). It catalyses the reaction 1,2-di-(9Z-octadecenoyl)-sn-glycero-3-phospho-N-methylethanolamine + S-adenosyl-L-methionine = 1,2-di-(9Z-octadecenoyl)-sn-glycero-3-phospho-N,N-dimethylethanolamine + S-adenosyl-L-homocysteine + H(+). The enzyme catalyses 1,2-di-(9Z-octadecenoyl)-sn-glycero-3-phospho-N,N-dimethylethanolamine + S-adenosyl-L-methionine = 1,2-di-(9Z-octadecenoyl)-sn-glycero-3-phosphocholine + S-adenosyl-L-homocysteine + H(+). It carries out the reaction 1,2-di-(9Z,12Z-octadecadienoyl)-sn-glycero-3-phosphoethanolamine + S-adenosyl-L-methionine = 1,2-di-(9Z,12Z-octadecadienoyl)-sn-glycero-3-phospho-N-methylethanolamine + S-adenosyl-L-homocysteine + H(+). The catalysed reaction is 1,2-di-(9Z,12Z-octadecadienoyl)-sn-glycero-3-phospho-N-methylethanolamine + S-adenosyl-L-methionine = 1,2-di-(9Z,12Z-octadecadienoyl)-sn-glycero-3-phospho-N,N-dimethylethanolamine + S-adenosyl-L-homocysteine + H(+). It catalyses the reaction 1,2-di-(9Z,12Z-octadecadienoyl)-sn-glycero-3-phospho-N,N-dimethylethanolamine + S-adenosyl-L-methionine = 1,2-di-(9Z,12Z-octadecadienoyl)-sn-glycero-3-phosphocholine + S-adenosyl-L-homocysteine + H(+). The enzyme catalyses 1,2-di-(9Z,12Z,15Z-octadecatrienoyl)-sn-glycero-3-phosphoethanolamine + S-adenosyl-L-methionine = 1,2-di-(9Z,12Z,15Z-octadecatrienoyl)-sn-glycero-3-phospho-N-methylethanolamine + S-adenosyl-L-homocysteine + H(+). It carries out the reaction 1,2-di-(9Z,12Z,15Z-octadecatrienoyl)-sn-glycero-3-phospho-N-methylethanolamine + S-adenosyl-L-methionine = 1,2-di-(9Z,12Z,15Z-octadecatrienoyl)-sn-glycero-3-phospho-N,N-dimethylethanolamine + S-adenosyl-L-homocysteine + H(+). The catalysed reaction is 1,2-di-(9Z,12Z,15Z-octadecatrienoyl)-sn-glycero-3-phospho-N,N-dimethylethanolamine + S-adenosyl-L-methionine = 1,2-di-(9Z,12Z,15Z-octadecatrienoyl)-sn-glycero-3-phosphocholine + S-adenosyl-L-homocysteine + H(+). It catalyses the reaction 1-hexadecanoyl-2-(4Z,7Z,10Z,13Z,16Z,19Z-docosahexaenoyl)-sn-glycero-3-phosphoethanolamine + S-adenosyl-L-methionine = 1-hexadecanoyl-2-(4Z,7Z,10Z,13Z,16Z,19Z-docosahexaenoyl)-sn-glycero-3-phospho-N-methylethanolamine + S-adenosyl-L-homocysteine + H(+). The enzyme catalyses 1-hexadecanoyl-2-(4Z,7Z,10Z,13Z,16Z,19Z-docosahexaenoyl)-sn-glycero-3-phospho-N-methylethanolamine + S-adenosyl-L-methionine = 1-hexadecanoyl-2-(4Z,7Z,10Z,13Z,16Z,19Z-docosahexaenoyl)-sn-glycero-3-phospho-N,N-dimethylethanolamine + S-adenosyl-L-homocysteine + H(+). It carries out the reaction 1-hexadecanoyl-2-(4Z,7Z,10Z,13Z,16Z,19Z-docosahexaenoyl)-sn-glycero-3-phospho-N,N-dimethylethanolamine + S-adenosyl-L-methionine = 1-hexadecanoyl-2-(4Z,7Z,10Z,13Z,16Z,19Z-docosahexaenoyl)-sn-glycero-3-phosphocholine + S-adenosyl-L-homocysteine + H(+). It participates in phospholipid metabolism; phosphatidylcholine biosynthesis. In terms of biological role, catalyzes the three sequential steps of the methylation pathway for the biosynthesis of phosphatidylcholine, a critical and essential component for membrane structure. Uses S-adenosylmethionine (S-adenosyl-L-methionine, SAM or AdoMet) as the methyl group donor for the methylation of phosphatidylethanolamine (1,2-diacyl-sn-glycero-3-phosphoethanolamine, PE) to phosphatidylmonomethylethanolamine (1,2-diacyl-sn-glycero-3-phospho-N-methylethanolamine, PMME), PMME to phosphatidyldimethylethanolamine (1,2-diacyl-sn-glycero-3-phospho-N,N-dimethylethanolamine, PDME), and PDME to phosphatidylcholine (1,2-diacyl-sn-glycero-3-phosphocholine, PC), producing S-adenosyl-L-homocysteine in each step. This chain is Phosphatidylethanolamine N-methyltransferase, found in Rattus norvegicus (Rat).